The primary structure comprises 189 residues: Peptidyl-tRNA hydrolase (189 aa).

TRNA is bound at residue Y15. H20 functions as the Proton acceptor in the catalytic mechanism. Residues Y65, N67, and N113 each coordinate tRNA.

This sequence belongs to the PTH family. As to quaternary structure, monomer.

It localises to the cytoplasm. The enzyme catalyses an N-acyl-L-alpha-aminoacyl-tRNA + H2O = an N-acyl-L-amino acid + a tRNA + H(+). Its function is as follows. Hydrolyzes ribosome-free peptidyl-tRNAs (with 1 or more amino acids incorporated), which drop off the ribosome during protein synthesis, or as a result of ribosome stalling. Catalyzes the release of premature peptidyl moieties from peptidyl-tRNA molecules trapped in stalled 50S ribosomal subunits, and thus maintains levels of free tRNAs and 50S ribosomes. The sequence is that of Peptidyl-tRNA hydrolase from Caldicellulosiruptor saccharolyticus (strain ATCC 43494 / DSM 8903 / Tp8T 6331).